We begin with the raw amino-acid sequence, 289 residues long: UDP-3-O-acyl-N-acetylglucosamine deacetylase (289 aa).

Residues H79, H236, and D240 each contribute to the Zn(2+) site. The active-site Proton donor is the H263.

It belongs to the LpxC family. Zn(2+) is required as a cofactor.

It catalyses the reaction a UDP-3-O-[(3R)-3-hydroxyacyl]-N-acetyl-alpha-D-glucosamine + H2O = a UDP-3-O-[(3R)-3-hydroxyacyl]-alpha-D-glucosamine + acetate. Its pathway is glycolipid biosynthesis; lipid IV(A) biosynthesis; lipid IV(A) from (3R)-3-hydroxytetradecanoyl-[acyl-carrier-protein] and UDP-N-acetyl-alpha-D-glucosamine: step 2/6. In terms of biological role, catalyzes the hydrolysis of UDP-3-O-myristoyl-N-acetylglucosamine to form UDP-3-O-myristoylglucosamine and acetate, the committed step in lipid A biosynthesis. In Rickettsia typhi (strain ATCC VR-144 / Wilmington), this protein is UDP-3-O-acyl-N-acetylglucosamine deacetylase.